The chain runs to 407 residues: Actinorhodin polyketide putative beta-ketoacyl synthase 2 (407 aa).

In terms of domain architecture, Ketosynthase family 3 (KS3) spans 1–402 (MSVLITGVGV…GFNSAAVLRR (402 aa)).

The protein belongs to the thiolase-like superfamily. Beta-ketoacyl-ACP synthases family.

The chain is Actinorhodin polyketide putative beta-ketoacyl synthase 2 from Streptomyces coelicolor (strain ATCC BAA-471 / A3(2) / M145).